Reading from the N-terminus, the 461-residue chain is Transforming growth factor beta-1-induced transcript 1 protein (461 aa).

Methionine 1 carries the N-acetylmethionine modification. The interval 1-87 (MEDLDALLSD…PFSSSSGVLG (87 aa)) is disordered. Residues 1–200 (MEDLDALLSD…GCPSPPGQTS (200 aa)) are transcription activation. An interaction with PTK2B/PYK2 region spans residues 1 to 240 (MEDLDALLSD…CNKPIAGQVV (240 aa)). An LD motif 1 motif is present at residues 3 to 15 (DLDALLSDLETTT). Threonine 33 is subject to Phosphothreonine. The residue at position 38 (tyrosine 38) is a Phosphotyrosine. Residues 44 to 53 (TGSGESSGTT) are compositionally biased toward low complexity. Tyrosine 60 is subject to Phosphotyrosine. Serine 68 is modified (phosphoserine). The segment at 83–136 (SGVLGNGLCELDRLLQELNATQFNITDEIMSQFPSSKMAEGEEKEDQSEDKSSP) is interaction with PTK2/FAK1. The LD motif 2 signature appears at 92 to 104 (ELDRLLQELNATQ). Residues 116 to 154 (PSSKMAEGEEKEDQSEDKSSPTVPPSPFPAPSKPSATSA) are disordered. Residues 137–147 (TVPPSPFPAPS) show a composition bias toward pro residues. Residues serine 141, serine 164, and serine 186 each carry the phosphoserine modification. The LD motif 3 motif lies at 157 to 168 (ELDRLMASLSDF). The tract at residues 171-204 (QNHLPASGPPQPPAASPTREGCPSPPGQTSKGSL) is disordered. Position 188 is a phosphothreonine (threonine 188). The residue at position 194 (serine 194) is a Phosphoserine. The LD motif 4 signature appears at 203-215 (SLDTMLGLLQSDL). LIM zinc-binding domains are found at residues 226–285 (GLCG…RFSP), 286–343 (RCGF…QLFA), 344–403 (PRCQ…QRGS), and 404–461 (LCAT…KLFG). Phosphoserine is present on serine 403. The residue at position 407 (threonine 407) is a Phosphothreonine.

The protein belongs to the paxillin family. Homooligomer. Interacts with PPARG. Interacts with TRAF4. Interacts with CRIP2. Interacts with HSPB1. Interacts with ILK. Interacts with LIMS1 and LIMS2. Interacts with NCK2. Interacts with NUDT16L1. Interacts with PAK. Interacts with PTPN12. Interacts with TCF3. Interacts with TCF7L2. Interacts with VCL. Interacts (via LD motif 3) with GIT1. Also interacts with GIT2. Forms a complex with ARHGEF7. Interacts with AR/androgen receptor in a ligand-dependent manner. Interacts with CSK. Interacts with PTK2/FAK1 and PTK2B/PYK2. Interacts with SLC6A3. Interacts with SLC6A4. Interacts with NR3C1. Interacts with SMAD3. Interacts with MAPK15. Interacts with SRC. Interacts with LYN. Interacts with talin. Interacts (via LIM zinc-binding domain 2) with CBLC (via RING-type zinc finger); the interaction is direct and enhances CBLC E3 ubiquitin-protein ligase activity. Interacts with PARVA. Interacts with PXN. Phosphorylated by gonadotropin-releasing hormone-activated SRC. As to expression, ubiquitously expressed. Higher expression is detected in lung and spleen. Expression decreases during pregnancy in mammary glands. Expressed in all brain areas, with higher levels in cerebellum, prefrontal cortex and hypothalamus. Expressed in smooth muscle, myoepithelial cells and platelets (at protein level). Preferentially expressed in mesenchymal versus epithelial cells (at protein level).

The protein localises to the cell junction. It is found in the focal adhesion. Its subcellular location is the nucleus matrix. The protein resides in the cytoplasm. It localises to the cytoskeleton. Functionally, functions as a molecular adapter coordinating multiple protein-protein interactions at the focal adhesion complex and in the nucleus. Links various intracellular signaling modules to plasma membrane receptors and regulates the Wnt and TGFB signaling pathways. May also regulate SLC6A3 and SLC6A4 targeting to the plasma membrane hence regulating their activity. In the nucleus, functions as a nuclear receptor coactivator regulating glucocorticoid, androgen, mineralocorticoid and progesterone receptor transcriptional activity. May play a role in the processes of cell growth, proliferation, migration, differentiation and senescence. May have a zinc-dependent DNA-binding activity. The sequence is that of Transforming growth factor beta-1-induced transcript 1 protein (Tgfb1i1) from Mus musculus (Mouse).